Consider the following 353-residue polypeptide: Phospho-N-acetylmuramoyl-pentapeptide-transferase (353 aa).

The next 10 helical transmembrane spans lie at 24 to 44, 66 to 86, 88 to 108, 129 to 149, 160 to 180, 192 to 212, 229 to 249, 256 to 276, 281 to 301, and 330 to 350; these read LGFFIAFFLTLFLMPKFILWA, TPTMGGIVFVFATIVASVLCA, LGNLYVLLGLIVLVGFSFVGF, FGMLFILSLIVSVLLSLKGLD, PLFEMPTMLAVGFWVLVFLST, GLASVPSIFTLLSLSIFVYVA, VGELFVVSLALVGSLFGFLWY, VFMGDSGSLALGGFIAYNAIV, ILLVLMGSIFVIETLSVILQV, and KVIVRFWIISMLSNLVALLSL.

Belongs to the glycosyltransferase 4 family. MraY subfamily. Mg(2+) serves as cofactor.

The protein localises to the cell inner membrane. It carries out the reaction UDP-N-acetyl-alpha-D-muramoyl-L-alanyl-gamma-D-glutamyl-meso-2,6-diaminopimeloyl-D-alanyl-D-alanine + di-trans,octa-cis-undecaprenyl phosphate = di-trans,octa-cis-undecaprenyl diphospho-N-acetyl-alpha-D-muramoyl-L-alanyl-D-glutamyl-meso-2,6-diaminopimeloyl-D-alanyl-D-alanine + UMP. Its pathway is cell wall biogenesis; peptidoglycan biosynthesis. Catalyzes the initial step of the lipid cycle reactions in the biosynthesis of the cell wall peptidoglycan: transfers peptidoglycan precursor phospho-MurNAc-pentapeptide from UDP-MurNAc-pentapeptide onto the lipid carrier undecaprenyl phosphate, yielding undecaprenyl-pyrophosphoryl-MurNAc-pentapeptide, known as lipid I. This chain is Phospho-N-acetylmuramoyl-pentapeptide-transferase, found in Helicobacter pylori (strain ATCC 700392 / 26695) (Campylobacter pylori).